An 871-amino-acid chain; its full sequence is Leucine--tRNA ligase (871 aa).

Residues 43–53 (PYPSGRIHIGH) carry the 'HIGH' region motif. The 'KMSKS' region signature appears at 629-633 (KMSKS). Lysine 632 provides a ligand contact to ATP.

This sequence belongs to the class-I aminoacyl-tRNA synthetase family.

The protein localises to the cytoplasm. The catalysed reaction is tRNA(Leu) + L-leucine + ATP = L-leucyl-tRNA(Leu) + AMP + diphosphate. The sequence is that of Leucine--tRNA ligase from Chelativorans sp. (strain BNC1).